The chain runs to 103 residues: MAAVSLSVSTVKPLGDRVFVKVSASEEKTAGGLYLPDTAKEKPQVGEVVALGAGKRNDDGSRQELEVKVGDKVLYSKYAGTDVKLGTEEYVLLSEKDILAVVG.

This sequence belongs to the GroES chaperonin family. Heptamer of 7 subunits arranged in a ring. Interacts with the chaperonin GroEL.

The protein resides in the cytoplasm. Together with the chaperonin GroEL, plays an essential role in assisting protein folding. The GroEL-GroES system forms a nano-cage that allows encapsulation of the non-native substrate proteins and provides a physical environment optimized to promote and accelerate protein folding. GroES binds to the apical surface of the GroEL ring, thereby capping the opening of the GroEL channel. The sequence is that of Co-chaperonin GroES from Nostoc sp. (strain PCC 7120 / SAG 25.82 / UTEX 2576).